The following is a 117-amino-acid chain: Large ribosomal subunit protein uL18 (117 aa).

This sequence belongs to the universal ribosomal protein uL18 family. As to quaternary structure, part of the 50S ribosomal subunit; part of the 5S rRNA/L5/L18/L25 subcomplex. Contacts the 5S and 23S rRNAs.

In terms of biological role, this is one of the proteins that bind and probably mediate the attachment of the 5S RNA into the large ribosomal subunit, where it forms part of the central protuberance. This is Large ribosomal subunit protein uL18 from Histophilus somni (strain 129Pt) (Haemophilus somnus).